Here is an 863-residue protein sequence, read N- to C-terminus: ATP-dependent helicase Lhr-Core protein 2 (863 aa).

Residues phenylalanine 30, glutamine 37, lysine 60, threonine 61, aspartate 179, glutamate 180, arginine 377, and histidine 380 each contribute to the ATP site. Residues valine 41–threonine 234 enclose the Helicase ATP-binding domain. Residues aspartate 179–histidine 182 carry the DEAH box motif. The Helicase C-terminal domain maps to arginine 275–aspartate 424. Positions isoleucine 418–isoleucine 512 are WH domain. The domain 4 stretch occupies residues proline 513–glutamate 863.

This sequence belongs to the Lhr helicase family. Lhr-Core subfamily. In terms of assembly, monomer.

It catalyses the reaction ATP + H2O = ADP + phosphate + H(+). With respect to regulation, unwinding of dsRNA duplexes is inhibited by AMP-PMP and ATP-gamma-S. In terms of biological role, a DNA:RNA helicase with a significant strand annealing activity, probably involved in DNA repair and RNA transactions. In vitro has a slow helicase activity with a preference for 3'-overhang duplexes; displaces RNA from 3'-overhang DNA:RNA or RNA:RNA duplexes. 3'-tailed double-stranded (ds)DNA is not unwound. The slow helicase activity on RNA duplexes is ATP-independent. Has strand annealing properties in the absence of ATP; forms 3'-overhang DNA:RNA, 3'-overhang dsRNA and 3'-overhang dsDNA duplexes but not 5'-overhang duplexes. A nucleic acid-dependent ATPase; single-stranded (ss)DNA and RNA are equally stimulatory. Binds ssDNA, RNA, dsDNA and dsRNA duplexes. This chain is ATP-dependent helicase Lhr-Core protein 2, found in Thermococcus barophilus (strain DSM 11836 / MP).